A 467-amino-acid chain; its full sequence is Asparagine--tRNA ligase (467 aa).

Belongs to the class-II aminoacyl-tRNA synthetase family. Homodimer.

It localises to the cytoplasm. The enzyme catalyses tRNA(Asn) + L-asparagine + ATP = L-asparaginyl-tRNA(Asn) + AMP + diphosphate + H(+). This Protochlamydia amoebophila (strain UWE25) protein is Asparagine--tRNA ligase.